Reading from the N-terminus, the 117-residue chain is Cell division protein FtsL (117 aa).

Residues 1–35 (MSNLAYQPEKQQRHAISPEKKVIVKKRASITLGEK) lie on the Cytoplasmic side of the membrane. Residues 36–56 (VLLVLFAAAVLSVSLLIVSKA) traverse the membrane as a helical segment. The Extracellular portion of the chain corresponds to 57–117 (YAAYQTNIEV…KDKKVKNIQE (61 aa)).

The protein belongs to the FtsL family. As to quaternary structure, monomer. Interacts with DivIB and DivIC. Interaction with DivIC stabilizes FtsL against RasP cleavage. Cleaved by RasP. Cleavage is important for turnover and function of FtsL.

Its subcellular location is the cell membrane. Functionally, essential cell division protein that may play a structural role. Probably involved in the regulation of the timing of cell division. Also required for sporulation. This is Cell division protein FtsL from Bacillus subtilis (strain 168).